We begin with the raw amino-acid sequence, 180 residues long: Large ribosomal subunit protein uL5 (180 aa).

The protein belongs to the universal ribosomal protein uL5 family. In terms of assembly, part of the 50S ribosomal subunit; part of the 5S rRNA/L5/L18/L25 subcomplex. Contacts the 5S rRNA and the P site tRNA. Forms a bridge to the 30S subunit in the 70S ribosome.

This is one of the proteins that bind and probably mediate the attachment of the 5S RNA into the large ribosomal subunit, where it forms part of the central protuberance. In the 70S ribosome it contacts protein S13 of the 30S subunit (bridge B1b), connecting the 2 subunits; this bridge is implicated in subunit movement. Contacts the P site tRNA; the 5S rRNA and some of its associated proteins might help stabilize positioning of ribosome-bound tRNAs. The polypeptide is Large ribosomal subunit protein uL5 (Chlamydia felis (strain Fe/C-56) (Chlamydophila felis)).